A 342-amino-acid polypeptide reads, in one-letter code: Anthranilate phosphoribosyltransferase (342 aa).

Residues G90, 93-94 (GD), T98, 100-103 (NIST), 118-126 (KHGNRSVSS), and A130 contribute to the 5-phospho-alpha-D-ribose 1-diphosphate site. G90 provides a ligand contact to anthranilate. Residue S102 participates in Mg(2+) binding. An anthranilate-binding site is contributed by N121. An anthranilate-binding site is contributed by R176. D234 and E235 together coordinate Mg(2+).

It belongs to the anthranilate phosphoribosyltransferase family. As to quaternary structure, homodimer. Mg(2+) is required as a cofactor.

It carries out the reaction N-(5-phospho-beta-D-ribosyl)anthranilate + diphosphate = 5-phospho-alpha-D-ribose 1-diphosphate + anthranilate. It participates in amino-acid biosynthesis; L-tryptophan biosynthesis; L-tryptophan from chorismate: step 2/5. Its function is as follows. Catalyzes the transfer of the phosphoribosyl group of 5-phosphorylribose-1-pyrophosphate (PRPP) to anthranilate to yield N-(5'-phosphoribosyl)-anthranilate (PRA). The chain is Anthranilate phosphoribosyltransferase from Mannheimia succiniciproducens (strain KCTC 0769BP / MBEL55E).